Here is a 445-residue protein sequence, read N- to C-terminus: Exodeoxyribonuclease 7 large subunit (445 aa).

Belongs to the XseA family. In terms of assembly, heterooligomer composed of large and small subunits.

The protein resides in the cytoplasm. It catalyses the reaction Exonucleolytic cleavage in either 5'- to 3'- or 3'- to 5'-direction to yield nucleoside 5'-phosphates.. Its function is as follows. Bidirectionally degrades single-stranded DNA into large acid-insoluble oligonucleotides, which are then degraded further into small acid-soluble oligonucleotides. The protein is Exodeoxyribonuclease 7 large subunit of Xanthomonas axonopodis pv. citri (strain 306).